Consider the following 155-residue polypeptide: Large ribosomal subunit protein eL19 (155 aa).

Basic residues predominate over residues 66–84 (VRHLQRRKGRRRGMGRRKG). A disordered region spans residues 66-85 (VRHLQRRKGRRRGMGRRKGV).

It belongs to the eukaryotic ribosomal protein eL19 family. Part of the 50S ribosomal subunit.

Its function is as follows. Binds to the 23S rRNA. The protein is Large ribosomal subunit protein eL19 of Aeropyrum pernix (strain ATCC 700893 / DSM 11879 / JCM 9820 / NBRC 100138 / K1).